Reading from the N-terminus, the 362-residue chain is Spermidine/putrescine import ATP-binding protein PotA (362 aa).

In terms of domain architecture, ABC transporter spans 4-235; it reads IKLDHITKQY…PVNDFVARFI (232 aa). Position 37 to 44 (37 to 44) interacts with ATP; it reads GPSGSGKT.

This sequence belongs to the ABC transporter superfamily. Spermidine/putrescine importer (TC 3.A.1.11.1) family. The complex is composed of two ATP-binding proteins (PotA), two transmembrane proteins (PotB and PotC) and a solute-binding protein (PotD).

It localises to the cell membrane. The catalysed reaction is ATP + H2O + polyamine-[polyamine-binding protein]Side 1 = ADP + phosphate + polyamineSide 2 + [polyamine-binding protein]Side 1.. In terms of biological role, part of the ABC transporter complex PotABCD involved in spermidine/putrescine import. Responsible for energy coupling to the transport system. The sequence is that of Spermidine/putrescine import ATP-binding protein PotA from Lactobacillus delbrueckii subsp. bulgaricus (strain ATCC BAA-365 / Lb-18).